A 365-amino-acid polypeptide reads, in one-letter code: Isoflavone 4'-O-methyltransferase (365 aa).

S-adenosyl-L-methionine is bound by residues 207–210 (VAGG), Asp231, 231–232 (DQ), 251–252 (DM), and Lys265. His269 serves as the catalytic Proton acceptor.

This sequence belongs to the class I-like SAM-binding methyltransferase superfamily. Cation-independent O-methyltransferase family. COMT subfamily.

The enzyme catalyses a 4'-hydroxyisoflavone + S-adenosyl-L-methionine = a 4'-methoxyisoflavone + S-adenosyl-L-homocysteine + H(+). The catalysed reaction is (2R,3S)-2,4',7-trihydroxyisoflavanone + S-adenosyl-L-methionine = (2R,3S)-2,7-dihydroxy-4'-methoxyisoflavanone + S-adenosyl-L-homocysteine + H(+). Functionally, 2-hydroxyisoflavanone 4'-O-methyltransferase involved in the biosynthesis of formononetin. Can use 2,7,4'-trihydroxyisoflavanone as substrate, but not daidzein. The chain is Isoflavone 4'-O-methyltransferase (HI4'OMT) from Lotus japonicus (Lotus corniculatus var. japonicus).